Reading from the N-terminus, the 133-residue chain is S-adenosylmethionine decarboxylase proenzyme (133 aa).

Ser-63 serves as the catalytic Schiff-base intermediate with substrate; via pyruvic acid. Ser-63 carries the pyruvic acid (Ser); by autocatalysis modification. His-68 functions as the Proton acceptor; for processing activity in the catalytic mechanism. Catalysis depends on Cys-83, which acts as the Proton donor; for catalytic activity.

Belongs to the prokaryotic AdoMetDC family. Type 1 subfamily. As to quaternary structure, heterotetramer of two alpha and two beta chains arranged as a dimer of alpha/beta heterodimers. The cofactor is pyruvate. In terms of processing, is synthesized initially as an inactive proenzyme. Formation of the active enzyme involves a self-maturation process in which the active site pyruvoyl group is generated from an internal serine residue via an autocatalytic post-translational modification. Two non-identical subunits are generated from the proenzyme in this reaction, and the pyruvate is formed at the N-terminus of the alpha chain, which is derived from the carboxyl end of the proenzyme. The post-translation cleavage follows an unusual pathway, termed non-hydrolytic serinolysis, in which the side chain hydroxyl group of the serine supplies its oxygen atom to form the C-terminus of the beta chain, while the remainder of the serine residue undergoes an oxidative deamination to produce ammonia and the pyruvoyl group blocking the N-terminus of the alpha chain.

It carries out the reaction S-adenosyl-L-methionine + H(+) = S-adenosyl 3-(methylsulfanyl)propylamine + CO2. The protein operates within amine and polyamine biosynthesis; S-adenosylmethioninamine biosynthesis; S-adenosylmethioninamine from S-adenosyl-L-methionine: step 1/1. Its function is as follows. Catalyzes the decarboxylation of S-adenosylmethionine to S-adenosylmethioninamine (dcAdoMet), the propylamine donor required for the synthesis of the polyamines spermine and spermidine from the diamine putrescine. This is S-adenosylmethionine decarboxylase proenzyme from Acidithiobacillus ferrooxidans (strain ATCC 23270 / DSM 14882 / CIP 104768 / NCIMB 8455) (Ferrobacillus ferrooxidans (strain ATCC 23270)).